The sequence spans 487 residues: Proline--tRNA ligase (487 aa).

It belongs to the class-II aminoacyl-tRNA synthetase family. ProS type 3 subfamily. Homodimer.

It is found in the cytoplasm. The enzyme catalyses tRNA(Pro) + L-proline + ATP = L-prolyl-tRNA(Pro) + AMP + diphosphate. Its function is as follows. Catalyzes the attachment of proline to tRNA(Pro) in a two-step reaction: proline is first activated by ATP to form Pro-AMP and then transferred to the acceptor end of tRNA(Pro). The chain is Proline--tRNA ligase from Pyrobaculum calidifontis (strain DSM 21063 / JCM 11548 / VA1).